The chain runs to 724 residues: Threonine--tRNA ligase 2, cytoplasmic (724 aa).

Ala2 carries the post-translational modification N-acetylalanine. Residues 44 to 72 adopt a coiled-coil conformation; that stretch reads QAEGPCLTREVAQLRAENRELRHCLYRLR. The tract at residues 90 to 112 is disordered; it reads RAEAGRAAAGAQPPPSQSLEEDV. The TGS domain maps to 155 to 220; that stretch reads DSSNVITVRV…EGDATVELLT (66 aa). Position 451 is a phosphoserine (Ser451).

Belongs to the class-II aminoacyl-tRNA synthetase family. May be a component of the multisynthetase complex (MSC), a large multi-subunit complex which contains at least eight different aminoacyl-tRNA synthetases plus three auxillary subunits AIMP1, AIMP2 and EEF1E1. Interacts with the MSC components EPRS1, AIMP1, AIMP2 and KARS1.

The protein resides in the cytoplasm. Its subcellular location is the nucleus. It carries out the reaction tRNA(Thr) + L-threonine + ATP = L-threonyl-tRNA(Thr) + AMP + diphosphate + H(+). In terms of biological role, catalyzes the attachment of threonine to tRNA(Thr) in a two-step reaction: threonine is first activated by ATP to form Thr-AMP and then transferred to the acceptor end of tRNA(Thr). Also edits incorrectly charged tRNA(Thr) via its editing domain, at the post-transfer stage. In Bos taurus (Bovine), this protein is Threonine--tRNA ligase 2, cytoplasmic (TARS3).